Consider the following 505-residue polypeptide: tRNA-2-methylthio-N(6)-dimethylallyladenosine synthase (505 aa).

The 117-residue stretch at 10–126 folds into the MTTase N-terminal domain; it reads RSYEVRTYGC…LPALLDRARH (117 aa). Cys-19, Cys-55, Cys-89, Cys-163, Cys-167, and Cys-170 together coordinate [4Fe-4S] cluster. Residues 149 to 385 enclose the Radical SAM core domain; it reads RESAYAGWVS…IALQEQITLE (237 aa). In terms of domain architecture, TRAM spans 388-459; it reads QKLVGAEVEL…PHHLVADTPV (72 aa).

It belongs to the methylthiotransferase family. MiaB subfamily. In terms of assembly, monomer. [4Fe-4S] cluster is required as a cofactor.

It localises to the cytoplasm. The enzyme catalyses N(6)-dimethylallyladenosine(37) in tRNA + (sulfur carrier)-SH + AH2 + 2 S-adenosyl-L-methionine = 2-methylsulfanyl-N(6)-dimethylallyladenosine(37) in tRNA + (sulfur carrier)-H + 5'-deoxyadenosine + L-methionine + A + S-adenosyl-L-homocysteine + 2 H(+). In terms of biological role, catalyzes the methylthiolation of N6-(dimethylallyl)adenosine (i(6)A), leading to the formation of 2-methylthio-N6-(dimethylallyl)adenosine (ms(2)i(6)A) at position 37 in tRNAs that read codons beginning with uridine. In Rhodococcus jostii (strain RHA1), this protein is tRNA-2-methylthio-N(6)-dimethylallyladenosine synthase.